The following is an 84-amino-acid chain: UPF0729 protein F18A11.3 (84 aa).

Residues 1-21 traverse the membrane as a helical segment; it reads MVCLPCIFLPIMMAIYMKFIM.

It belongs to the UPF0729 family.

It is found in the cell membrane. The sequence is that of UPF0729 protein F18A11.3 from Caenorhabditis elegans.